We begin with the raw amino-acid sequence, 217 residues long: MRLILLGAPGAGKGTQAAFICRKYGIPQISTGDMLRAAVKAGTEMGLAAKKVMDAGGLVSDDIIIGLVKERILQDDCANGFLFDGFPRTIPQAEAMKAAGVKLDLVLEIDVPSEAIIERMSGRRSHPASGRTYHVKFNPPKVDGVDDVTGEPLVQRDDDKEETVRKRLEVYQAQTRPLVDYYSAWAATGDAAAPRYAKIEGLGTVEEITARALAALG.

ATP is bound at residue 10-15; it reads GAGKGT. Residues 30-59 are NMP; sequence STGDMLRAAVKAGTEMGLAAKKVMDAGGLV. Residues Thr-31, Arg-36, 57-59, 85-88, and Gln-92 each bind AMP; these read GLV and GFPR. Positions 122 to 159 are LID; the sequence is GRRSHPASGRTYHVKFNPPKVDGVDDVTGEPLVQRDDD. ATP is bound by residues Arg-123 and 132-133; that span reads TY. 2 residues coordinate AMP: Arg-156 and Arg-167. Residue Gly-203 coordinates ATP.

This sequence belongs to the adenylate kinase family. Monomer.

The protein resides in the cytoplasm. The catalysed reaction is AMP + ATP = 2 ADP. It participates in purine metabolism; AMP biosynthesis via salvage pathway; AMP from ADP: step 1/1. Functionally, catalyzes the reversible transfer of the terminal phosphate group between ATP and AMP. Plays an important role in cellular energy homeostasis and in adenine nucleotide metabolism. The sequence is that of Adenylate kinase from Leptothrix cholodnii (strain ATCC 51168 / LMG 8142 / SP-6) (Leptothrix discophora (strain SP-6)).